We begin with the raw amino-acid sequence, 364 residues long: Trans-enoyl reductase sthE (364 aa).

51–54 (TDYK) is an NADP(+) binding site. 137-144 (WGTAALAI) is a binding site for substrate. NADP(+) contacts are provided by residues 172 to 175 (ATAT), 195 to 198 (SESS), Tyr213, and 261 to 262 (LE). 281–285 (GFEGQ) contacts substrate. Position 351-352 (351-352 (VK)) interacts with NADP(+).

It belongs to the zinc-containing alcohol dehydrogenase family. As to quaternary structure, monomer.

The enzyme catalyses 7 malonyl-CoA + acetyl-CoA + 10 AH2 + 5 S-adenosyl-L-methionine + 2 H(+) = dehydroprobetaenone I + 10 A + 5 S-adenosyl-L-homocysteine + 7 CO2 + 8 CoA + 6 H2O. It functions in the pathway mycotoxin biosynthesis. Functionally, trans-enoyl reductase; part of the gene cluster that mediates the biosynthesis of the phytotoxin stemphyloxin II. The first step of the pathway is the synthesis of dehydroprobetaenone I by the polyketide synthase sthA and the enoyl reductase sthE via condensation of one acetyl-CoA starter unit with 7 malonyl-CoA units and 5 methylations. The C-terminal reductase (R) domain of sthA catalyzes the reductive release of the polyketide chain. Because sthA lacks a designated enoylreductase (ER) domain, the required activity is provided the enoyl reductase sthE. The short-chain dehydrogenase/reductase sthC then catalyzes reduction of dehydroprobetaenone I to probetaenone I. The cytochrome P450 monooxygenase sthF catalyzes successive epoxidation, oxidation (resulting from epoxide opening) and hydroxylation to install a tertiary alcohol in the decaline ring to yield betaenone C from dehydroprobetaenone I and betaenone B from probetaenone I. The FAD-linked oxidoreductase sthB is responsible for the conversion of betaenone C to betaenone A via an intramolecular aldol reaction between C-1 and C-17 to form the bridged tricyclic system in betaenone A. Finally, the cytochrome P450 monooxygenase sthD catalyzes the hydroxylation of C-15 to afford the final metabolite stemphyloxin II. This is Trans-enoyl reductase sthE from Phaeosphaeria nodorum (strain SN15 / ATCC MYA-4574 / FGSC 10173) (Glume blotch fungus).